Consider the following 87-residue polypeptide: Stannin (87 aa).

Residues 1-10 (MSIMDHSPTT) lie on the Mitochondrial intermembrane side of the membrane. A helical transmembrane segment spans residues 11 to 31 (GVVTVIVILIAIAALGALILG). Residues 32–87 (CWCYLRLQRISQSEDEESIVGDGETKEPFLLVQYSAKGPCVERKAKLTPNGPEVHS) lie on the Cytoplasmic side of the membrane. Phosphoserine is present on Ser-49.

This sequence belongs to the stannin family. As to quaternary structure, monomer.

It localises to the mitochondrion outer membrane. Plays a role in the toxic effects of organotins. Plays a role in endosomal maturation. This is Stannin (SNN) from Bos taurus (Bovine).